The chain runs to 743 residues: Alpha-N-acetylglucosaminidase (743 aa).

Residues 1–23 form the signal peptide; the sequence is MEAVAVAAAVGVLLLAGAGGAAG. Residues Asn-261, Asn-272, Asn-435, Asn-503, Asn-526, and Asn-532 are each glycosylated (N-linked (GlcNAc...) asparagine).

This sequence belongs to the glycosyl hydrolase 89 family. Monomer and homodimer. As to expression, liver, ovary, peripheral blood leukocytes, testis, prostate, spleen, colon, lung, placenta and kidney.

Its subcellular location is the lysosome. The catalysed reaction is Hydrolysis of terminal non-reducing N-acetyl-D-glucosamine residues in N-acetyl-alpha-D-glucosaminides.. In terms of biological role, involved in the degradation of heparan sulfate. The protein is Alpha-N-acetylglucosaminidase (NAGLU) of Homo sapiens (Human).